Reading from the N-terminus, the 531-residue chain is Polypyrimidine tract-binding protein 2 (531 aa).

Met1 carries the post-translational modification N-acetylmethionine. Phosphoserine occurs at positions 26 and 27. 2 RRM domains span residues 59 to 133 (RVLH…YSNH) and 181 to 257 (LRII…FSKL). Ser308 is modified (phosphoserine). RRM domains are found at residues 338 to 412 (TVLL…LSKH) and 455 to 529 (ATLH…FSKS).

As to quaternary structure, monomer. Interacts with NOVA1; the interaction is direct. Identified in a mRNP complex, at least composed of DHX9, DDX3X, ELAVL1, HNRNPU, IGF2BP1, ILF3, PABPC1, PCBP2, PTBP2, STAU1, STAU2, SYNCRIP and YBX1. Part of a ternary complex containing KHSRP and HNRPH1. Interacts with NOVA2; the interaction is direct.

The protein localises to the nucleus. Its function is as follows. RNA-binding protein which binds to intronic polypyrimidine tracts and mediates negative regulation of exons splicing. May antagonize in a tissue-specific manner the ability of NOVA1 to activate exon selection. In addition to its function in pre-mRNA splicing, plays also a role in the regulation of translation. This is Polypyrimidine tract-binding protein 2 from Rattus norvegicus (Rat).